We begin with the raw amino-acid sequence, 256 residues long: Small ribosomal subunit protein eS1A (256 aa).

Ala2 bears the N-acetylalanine; partial mark.

Belongs to the eukaryotic ribosomal protein eS1 family. As to quaternary structure, component of the small ribosomal subunit. Mature ribosomes consist of a small (40S) and a large (60S) subunit. The 40S subunit contains about 33 different proteins and 1 molecule of RNA (18S). The 60S subunit contains about 49 different proteins and 3 molecules of RNA (25S, 5.8S and 5S).

It is found in the cytoplasm. This chain is Small ribosomal subunit protein eS1A, found in Clavispora lusitaniae (strain ATCC 42720) (Yeast).